Here is a 211-residue protein sequence, read N- to C-terminus: Methylamine utilization protein MauD (211 aa).

Residues 5–25 (ILIASNVLLWGAFLALAALML) traverse the membrane as a helical segment. Residues 50-187 (PDVGERSPIF…LFETIREGHS (138 aa)) form the Thioredoxin domain.

The protein localises to the membrane. The protein operates within one-carbon metabolism; methylamine degradation. Its function is as follows. May be specifically involved in the processing, transport, and/or maturation of the MADH beta-subunit. The polypeptide is Methylamine utilization protein MauD (mauD) (Methylophilus methylotrophus (Bacterium W3A1)).